The chain runs to 195 residues: Cholesin (195 aa).

The segment at M1–A78 is disordered. 2 stretches are compositionally biased toward basic and acidic residues: residues G8–R18 and E26–T39. Phosphoserine is present on residues S41, S48, and S52. Over residues P53 to E77 the composition is skewed to basic and acidic residues. Residue S96 is modified to Phosphoserine.

As to expression, secreted via exosomes, secreted from the instestine, secretion is induced by feeding and cholesterol absorption. Expressed in enterocytes.

It localises to the secreted. Hormone secreted from the intestine in response to cholesterol, where it acts to inhibit cholesterol synthesis in the liver and VLDL secretion,leading to a reduction in circulating cholesterol levels. Acts through binding to its receptor, GPR146. In Mus musculus (Mouse), this protein is Cholesin (Chlsn).